A 636-amino-acid chain; its full sequence is Chaperone protein DnaK (636 aa).

Threonine 198 carries the post-translational modification Phosphothreonine; by autocatalysis. The segment at tyrosine 598–lysine 636 is disordered. A compositionally biased stretch (basic and acidic residues) spans glutamine 603–asparagine 625. The segment covering valine 626–lysine 636 has biased composition (acidic residues).

This sequence belongs to the heat shock protein 70 family.

In terms of biological role, acts as a chaperone. This Pelobacter propionicus (strain DSM 2379 / NBRC 103807 / OttBd1) protein is Chaperone protein DnaK.